Reading from the N-terminus, the 61-residue chain is Small ribosomal subunit protein uS14 (61 aa).

Cys24, Cys27, Cys40, and Cys43 together coordinate Zn(2+).

This sequence belongs to the universal ribosomal protein uS14 family. Zinc-binding uS14 subfamily. Part of the 30S ribosomal subunit. Contacts proteins S3 and S10. Requires Zn(2+) as cofactor.

Functionally, binds 16S rRNA, required for the assembly of 30S particles and may also be responsible for determining the conformation of the 16S rRNA at the A site. This is Small ribosomal subunit protein uS14 from Nitratidesulfovibrio vulgaris (strain ATCC 29579 / DSM 644 / CCUG 34227 / NCIMB 8303 / VKM B-1760 / Hildenborough) (Desulfovibrio vulgaris).